The chain runs to 792 residues: Phenylalanine--tRNA ligase beta subunit (792 aa).

Positions 39-147 constitute a tRNA-binding domain; it reads GESLGQVVVA…DDAPVGQALA (109 aa). Positions 400 to 475 constitute a B5 domain; it reads PQPARILLRR…RIHGYDRVPT (76 aa). Mg(2+)-binding residues include Asp453, Asp459, Glu462, and Asp463. Residues 698–791 enclose the FDX-ACB domain; that stretch reads SRFPSVRRDL…IEREHRARIR (94 aa).

The protein belongs to the phenylalanyl-tRNA synthetase beta subunit family. Type 1 subfamily. In terms of assembly, tetramer of two alpha and two beta subunits. Mg(2+) serves as cofactor.

The protein resides in the cytoplasm. The catalysed reaction is tRNA(Phe) + L-phenylalanine + ATP = L-phenylalanyl-tRNA(Phe) + AMP + diphosphate + H(+). The sequence is that of Phenylalanine--tRNA ligase beta subunit from Xanthomonas oryzae pv. oryzae (strain KACC10331 / KXO85).